A 695-amino-acid polypeptide reads, in one-letter code: Putative ATP-dependent RNA helicase L540 (695 aa).

Residues 53-219 enclose the Helicase ATP-binding domain; the sequence is LSALENYQLV…FNSVDSTVID (167 aa). Residue 66–73 coordinates ATP; it reads SSTGSGKS. The DEAH box signature appears at 164-167; it reads DEAH. Residues 247-434 enclose the Helicase C-terminal domain; that stretch reads LIEDLIHQQI…GINMMNQLMD (188 aa).

This sequence belongs to the DEAD box helicase family. DEAH subfamily.

It is found in the virion. The catalysed reaction is ATP + H2O = ADP + phosphate + H(+). This is Putative ATP-dependent RNA helicase L540 from Acanthamoeba polyphaga (Amoeba).